Reading from the N-terminus, the 318-residue chain is Pyrimidine-specific ribonucleoside hydrolase RihA (318 aa).

Residue His-240 is part of the active site.

It belongs to the IUNH family. RihA subfamily.

Hydrolyzes cytidine or uridine to ribose and cytosine or uracil, respectively. This Shewanella baltica (strain OS185) protein is Pyrimidine-specific ribonucleoside hydrolase RihA.